A 540-amino-acid polypeptide reads, in one-letter code: Chaperonin GroEL 2 (540 aa).

Residues 29–32 (TLGP), 86–90 (DGTTT), glycine 413, 476–478 (NAA), and aspartate 492 each bind ATP.

This sequence belongs to the chaperonin (HSP60) family. In terms of assembly, forms a cylinder of 14 subunits composed of two heptameric rings stacked back-to-back. Interacts with the co-chaperonin GroES.

It is found in the cytoplasm. It carries out the reaction ATP + H2O + a folded polypeptide = ADP + phosphate + an unfolded polypeptide.. Together with its co-chaperonin GroES, plays an essential role in assisting protein folding. The GroEL-GroES system forms a nano-cage that allows encapsulation of the non-native substrate proteins and provides a physical environment optimized to promote and accelerate protein folding. The sequence is that of Chaperonin GroEL 2 from Streptomyces albus G.